The primary structure comprises 552 residues: Membrane protein insertase YidC (552 aa).

Residues 3-23 form a helical membrane-spanning segment; it reads IKRTVLWVIFFMSAVMLFDNW. Residues 36-59 form a disordered region; it reads SATPTRTVGSAAPGTTTPGTQPAD. The segment covering 42–59 has biased composition (low complexity); sequence TVGSAAPGTTTPGTQPAD. A run of 3 helical transmembrane segments spans residues 364–384, 430–450, and 504–524; these read WGWS…PLSA, FGGC…YWVL, and MMFM…GLVL.

Belongs to the OXA1/ALB3/YidC family. Type 1 subfamily. As to quaternary structure, interacts with the Sec translocase complex via SecD. Specifically interacts with transmembrane segments of nascent integral membrane proteins during membrane integration.

The protein resides in the cell inner membrane. Its function is as follows. Required for the insertion and/or proper folding and/or complex formation of integral membrane proteins into the membrane. Involved in integration of membrane proteins that insert both dependently and independently of the Sec translocase complex, as well as at least some lipoproteins. Aids folding of multispanning membrane proteins. The polypeptide is Membrane protein insertase YidC (Paraburkholderia xenovorans (strain LB400)).